Here is a 313-residue protein sequence, read N- to C-terminus: Ribonuclease Z (313 aa).

The Zn(2+) site is built by H63, H65, D67, H68, H142, D212, and H270. D67 (proton acceptor) is an active-site residue.

This sequence belongs to the RNase Z family. Homodimer. Zn(2+) serves as cofactor.

The catalysed reaction is Endonucleolytic cleavage of RNA, removing extra 3' nucleotides from tRNA precursor, generating 3' termini of tRNAs. A 3'-hydroxy group is left at the tRNA terminus and a 5'-phosphoryl group is left at the trailer molecule.. Functionally, zinc phosphodiesterase, which displays some tRNA 3'-processing endonuclease activity. Probably involved in tRNA maturation, by removing a 3'-trailer from precursor tRNA. This chain is Ribonuclease Z, found in Enterococcus faecalis (strain ATCC 700802 / V583).